Here is a 190-residue protein sequence, read N- to C-terminus: Inosine triphosphate pyrophosphatase (190 aa).

Residue 10–15 (TGNAKK) coordinates ITP. Mg(2+) is bound at residue Glu40. ITP is bound by residues Lys52, 68–69 (DT), Lys85, 144–147 (FGWD), Lys167, and 172–173 (HR).

It belongs to the HAM1 NTPase family. As to quaternary structure, homodimer. Requires Mg(2+) as cofactor. Mn(2+) is required as a cofactor.

The protein localises to the cytoplasm. It carries out the reaction ITP + H2O = IMP + diphosphate + H(+). It catalyses the reaction dITP + H2O = dIMP + diphosphate + H(+). The catalysed reaction is XTP + H2O = XMP + diphosphate + H(+). In terms of biological role, pyrophosphatase that hydrolyzes non-canonical purine nucleotides such as inosine triphosphate (ITP), deoxyinosine triphosphate (dITP) or xanthosine 5'-triphosphate (XTP) to their respective monophosphate derivatives. The enzyme does not distinguish between the deoxy- and ribose forms. Probably excludes non-canonical purines from RNA and DNA precursor pools, thus preventing their incorporation into RNA and DNA and avoiding chromosomal lesions. This chain is Inosine triphosphate pyrophosphatase, found in Culex quinquefasciatus (Southern house mosquito).